We begin with the raw amino-acid sequence, 101 residues long: Large ribosomal subunit protein eL31 (101 aa).

The protein belongs to the eukaryotic ribosomal protein eL31 family.

In Ignicoccus hospitalis (strain KIN4/I / DSM 18386 / JCM 14125), this protein is Large ribosomal subunit protein eL31.